We begin with the raw amino-acid sequence, 250 residues long: Probable cytokinin riboside 5'-monophosphate phosphoribohydrolase LOGL6 (250 aa).

Residues Glu98, 116-117 (RK), and 133-139 (GYGTLEE) each bind substrate.

Belongs to the LOG family. Expressed in roots, leaves, stems, tiller buds, shoot apex, immature inflorescences and flowers.

It catalyses the reaction N(6)-(dimethylallyl)adenosine 5'-phosphate + H2O = N(6)-dimethylallyladenine + D-ribose 5-phosphate. It carries out the reaction 9-ribosyl-trans-zeatin 5'-phosphate + H2O = trans-zeatin + D-ribose 5-phosphate. In terms of biological role, cytokinin-activating enzyme working in the direct activation pathway. Phosphoribohydrolase that converts inactive cytokinin nucleotides to the biologically active free-base forms. The polypeptide is Probable cytokinin riboside 5'-monophosphate phosphoribohydrolase LOGL6 (LOGL6) (Oryza sativa subsp. japonica (Rice)).